We begin with the raw amino-acid sequence, 297 residues long: Glutamyl-Q tRNA(Asp) synthetase (297 aa).

L-glutamate is bound by residues arginine 9–serine 13 and glutamate 45. The 'HIGH' region motif lies at proline 12–serine 22. Positions 101, 103, and 118 each coordinate Zn(2+). Residues tyrosine 170 and arginine 188 each coordinate L-glutamate. The 'KMSKS' region motif lies at lysine 226–serine 230. Residue lysine 229 coordinates ATP.

Belongs to the class-I aminoacyl-tRNA synthetase family. GluQ subfamily. The cofactor is Zn(2+).

Catalyzes the tRNA-independent activation of glutamate in presence of ATP and the subsequent transfer of glutamate onto a tRNA(Asp). Glutamate is transferred on the 2-amino-5-(4,5-dihydroxy-2-cyclopenten-1-yl) moiety of the queuosine in the wobble position of the QUC anticodon. This is Glutamyl-Q tRNA(Asp) synthetase from Xanthomonas campestris pv. campestris (strain 8004).